A 60-amino-acid polypeptide reads, in one-letter code: Large ribosomal subunit protein uL30 (60 aa).

Belongs to the universal ribosomal protein uL30 family. Part of the 50S ribosomal subunit.

The protein is Large ribosomal subunit protein uL30 of Dehalococcoides mccartyi (strain CBDB1).